The primary structure comprises 81 residues: ATP synthase subunit c (81 aa).

A run of 2 helical transmembrane segments spans residues 5 to 25 (IAAGALIGGGLIMAGGAIGAG) and 57 to 77 (VGLVEAAYFINLAFMALFVFA).

This sequence belongs to the ATPase C chain family. As to quaternary structure, F-type ATPases have 2 components, F(1) - the catalytic core - and F(0) - the membrane proton channel. F(1) has five subunits: alpha(3), beta(3), gamma(1), delta(1), epsilon(1). F(0) has three main subunits: a(1), b(2) and c(10-14). The alpha and beta chains form an alternating ring which encloses part of the gamma chain. F(1) is attached to F(0) by a central stalk formed by the gamma and epsilon chains, while a peripheral stalk is formed by the delta and b chains.

It is found in the cell membrane. F(1)F(0) ATP synthase produces ATP from ADP in the presence of a proton or sodium gradient. F-type ATPases consist of two structural domains, F(1) containing the extramembraneous catalytic core and F(0) containing the membrane proton channel, linked together by a central stalk and a peripheral stalk. During catalysis, ATP synthesis in the catalytic domain of F(1) is coupled via a rotary mechanism of the central stalk subunits to proton translocation. Functionally, key component of the F(0) channel; it plays a direct role in translocation across the membrane. A homomeric c-ring of between 10-14 subunits forms the central stalk rotor element with the F(1) delta and epsilon subunits. The polypeptide is ATP synthase subunit c (Mycobacterium marinum (strain ATCC BAA-535 / M)).